The primary structure comprises 91 residues: Small ribosomal subunit protein uS19 (91 aa).

The protein belongs to the universal ribosomal protein uS19 family.

Protein S19 forms a complex with S13 that binds strongly to the 16S ribosomal RNA. This is Small ribosomal subunit protein uS19 from Prochlorococcus marinus (strain MIT 9211).